Consider the following 267-residue polypeptide: Integral membrane protein 2C (267 aa).

Threonine 37 bears the Phosphothreonine mark. The helical; Signal-anchor for type II membrane protein transmembrane segment at 55–75 (VGGVCYLSMGMVVLLMGLVFA) threads the bilayer. The BRICHOS domain maps to 136–230 (FGGGDPADII…LCNGKDTYRL (95 aa)). Residues cysteine 163 and cysteine 222 are joined by a disulfide bond. Residue asparagine 169 is glycosylated (N-linked (GlcNAc...) asparagine).

It belongs to the ITM2 family. As to quaternary structure, interacts with BACE1. Interacts with APP. Interacts with STMN2. Post-translationally, type I membrane-bound, as well as soluble, furin has a pre-eminent role in ITM2C proteolytic processing. PCSK7 and PCSK5 may also be involved although to a lesser extent. The soluble form of PCSK7 is incapable of processing ITM2C. Fails to undergo shedding by ADAM10 and intramembrane cleavage by SPPL2B.

It is found in the lysosome membrane. The protein localises to the cell membrane. Functionally, negative regulator of amyloid-beta peptide production. May inhibit the processing of APP by blocking its access to alpha- and beta-secretase. Binding to the beta-secretase-cleaved APP C-terminal fragment is negligible, suggesting that ITM2C is a poor gamma-secretase cleavage inhibitor. May play a role in TNF-induced cell death and neuronal differentiation. The polypeptide is Integral membrane protein 2C (ITM2C) (Macaca fascicularis (Crab-eating macaque)).